Reading from the N-terminus, the 397-residue chain is Ubiquitin-like modifier-activating enzyme 5 (397 aa).

ATP is bound by residues Gly77, Asp98, Lys121, Asn144, and Asn178. Residues Cys220 and Cys223 each contribute to the Zn(2+) site. Cys244 serves as the catalytic Glycyl thioester intermediate. Positions 297 and 302 each coordinate Zn(2+).

The protein belongs to the ubiquitin-activating E1 family. UBA5 subfamily.

In terms of biological role, E1-like enzyme which activates UFM1. This is Ubiquitin-like modifier-activating enzyme 5 from Culex quinquefasciatus (Southern house mosquito).